We begin with the raw amino-acid sequence, 452 residues long: Probable ECA polymerase (452 aa).

A run of 11 helical transmembrane segments spans residues 6–26 (FSGL…LTWF), 37–57 (VFFS…TSVL), 63–83 (VGVA…CFYG), 118–138 (VILM…NGFL), 155–175 (GVAL…VYFL), 181–201 (AWLF…MIVG), 207–227 (IIIA…ISLW), 228–248 (MLAA…LKRY), 341–361 (LVVM…GLII), 378–398 (YKAA…IVLA), and 410–430 (VFFL…FWLF).

Belongs to the WzyE family. As to quaternary structure, probably part of a complex composed of WzxE, WzyE and WzzE.

Its subcellular location is the cell inner membrane. The protein operates within bacterial outer membrane biogenesis; enterobacterial common antigen biosynthesis. Functionally, probably involved in the polymerization of enterobacterial common antigen (ECA) trisaccharide repeat units. This chain is Probable ECA polymerase, found in Salmonella arizonae (strain ATCC BAA-731 / CDC346-86 / RSK2980).